The following is a 753-amino-acid chain: 5-methyltetrahydropteroyltriglutamate--homocysteine methyltransferase (753 aa).

5-methyltetrahydropteroyltri-L-glutamate contacts are provided by residues 17 to 20 (RELK) and lysine 117. Residues 431 to 433 (IGS) and glutamate 484 each bind L-homocysteine. L-methionine-binding positions include 431-433 (IGS) and glutamate 484. 5-methyltetrahydropteroyltri-L-glutamate contacts are provided by residues 515-516 (RC) and tryptophan 561. Residue aspartate 599 coordinates L-homocysteine. Aspartate 599 contributes to the L-methionine binding site. Glutamate 605 is a 5-methyltetrahydropteroyltri-L-glutamate binding site. 3 residues coordinate Zn(2+): histidine 641, cysteine 643, and glutamate 665. Histidine 694 functions as the Proton donor in the catalytic mechanism. Cysteine 726 provides a ligand contact to Zn(2+).

Belongs to the vitamin-B12 independent methionine synthase family. The cofactor is Zn(2+).

The enzyme catalyses 5-methyltetrahydropteroyltri-L-glutamate + L-homocysteine = tetrahydropteroyltri-L-glutamate + L-methionine. It participates in amino-acid biosynthesis; L-methionine biosynthesis via de novo pathway; L-methionine from L-homocysteine (MetE route): step 1/1. Its function is as follows. Catalyzes the transfer of a methyl group from 5-methyltetrahydrofolate to homocysteine resulting in methionine formation. This Escherichia coli (strain UTI89 / UPEC) protein is 5-methyltetrahydropteroyltriglutamate--homocysteine methyltransferase.